The primary structure comprises 184 residues: MSQAIGILELTSIAKGMEAGDAMLKSANVNLLVSKTICPGKFLLMLGGDVGAVQQAIATGTSLAGDMLVDSLVLPNIHASVLPAISGLNSVDKRQAVGIVETWSVAACICAADRAVKASNVTLVRVHMAFGIGGKCYMVVAGDVSDVNNAVTVASESAGEKGLLVYRSVIPRPHESMWRQMVEG.

BMC domains lie at 4–86 (AIGI…PAIS) and 96–182 (AVGI…RQMV). C38 contacts [4Fe-4S] cluster.

Belongs to the bacterial microcompartments protein family. As to quaternary structure, homotrimerizes to form a pseudohexamer with a large central pore, which is probably the binding site for the [4Fe-4S] center. Interacts with PduS. Originally suggested to be a homotetramer; this is incorrect. [4Fe-4S] cluster is required as a cofactor.

The protein resides in the bacterial microcompartment. Its pathway is polyol metabolism; 1,2-propanediol degradation. Its function is as follows. A minor shell protein of the bacterial microcompartment (BMC) dedicated to 1,2-propanediol (1,2-PD) degradation. Overexpression of this protein leads to cells with either deposits or having lamina-like structures in the cytoplasm. Not absolutely required to make artificial BMCs. May selectively transport specific metabolites. Functionally, expression of a cosmid containing the full 21-gene pdu operon in E.coli allows E.coli to grow on 1,2-propanediol (1,2-PD) with the appearance of bacterial microcompartments (BMC) in its cytoplasm. In terms of biological role, the 1,2-PD-specific bacterial microcompartment (BMC) concentrates low levels of 1,2-PD catabolic enzymes, concentrates volatile reaction intermediates thus enhancing pathway flux and keeps the level of toxic, mutagenic propionaldehyde low. The chain is Bacterial microcompartment shell protein PduT from Citrobacter freundii.